Consider the following 494-residue polypeptide: AAA-ATPase At2g18190 (494 aa).

The chain crosses the membrane as a helical span at residues 13 to 29; sequence SSLFTAYASLTGFLMLF. 251–258 is an ATP binding site; that stretch reads GPPGTGKS. A compositionally biased stretch (basic and acidic residues) spans 459–470; that stretch reads TCRKLDGDDKHN. The disordered stretch occupies residues 459–494; the sequence is TCRKLDGDDKHNVSSTNDLKKTKKKKKGGKGKAKGN. Positions 479–494 are enriched in basic residues; the sequence is KTKKKKKGGKGKAKGN.

This sequence belongs to the AAA ATPase family. BCS1 subfamily. The cofactor is Mg(2+).

Its subcellular location is the membrane. It carries out the reaction ATP + H2O = ADP + phosphate + H(+). In Arabidopsis thaliana (Mouse-ear cress), this protein is AAA-ATPase At2g18190.